A 237-amino-acid polypeptide reads, in one-letter code: Phosphoribosylaminoimidazole-succinocarboxamide synthase (237 aa).

It belongs to the SAICAR synthetase family.

The catalysed reaction is 5-amino-1-(5-phospho-D-ribosyl)imidazole-4-carboxylate + L-aspartate + ATP = (2S)-2-[5-amino-1-(5-phospho-beta-D-ribosyl)imidazole-4-carboxamido]succinate + ADP + phosphate + 2 H(+). It participates in purine metabolism; IMP biosynthesis via de novo pathway; 5-amino-1-(5-phospho-D-ribosyl)imidazole-4-carboxamide from 5-amino-1-(5-phospho-D-ribosyl)imidazole-4-carboxylate: step 1/2. In Fusobacterium nucleatum subsp. nucleatum (strain ATCC 25586 / DSM 15643 / BCRC 10681 / CIP 101130 / JCM 8532 / KCTC 2640 / LMG 13131 / VPI 4355), this protein is Phosphoribosylaminoimidazole-succinocarboxamide synthase.